Reading from the N-terminus, the 933-residue chain is 2-oxoglutarate dehydrogenase E1 component (933 aa).

It belongs to the alpha-ketoglutarate dehydrogenase family. In terms of assembly, homodimer. Part of the 2-oxoglutarate dehydrogenase (OGDH) complex composed of E1 (2-oxoglutarate dehydrogenase), E2 (dihydrolipoamide succinyltransferase) and E3 (dihydrolipoamide dehydrogenase); the complex contains multiple copies of the three enzymatic components (E1, E2 and E3). Thiamine diphosphate is required as a cofactor.

The catalysed reaction is N(6)-[(R)-lipoyl]-L-lysyl-[protein] + 2-oxoglutarate + H(+) = N(6)-[(R)-S(8)-succinyldihydrolipoyl]-L-lysyl-[protein] + CO2. Functionally, E1 component of the 2-oxoglutarate dehydrogenase (OGDH) complex which catalyzes the decarboxylation of 2-oxoglutarate, the first step in the conversion of 2-oxoglutarate to succinyl-CoA and CO(2). This Staphylococcus saprophyticus subsp. saprophyticus (strain ATCC 15305 / DSM 20229 / NCIMB 8711 / NCTC 7292 / S-41) protein is 2-oxoglutarate dehydrogenase E1 component.